Here is a 255-residue protein sequence, read N- to C-terminus: Large ribosomal subunit protein eL8 (255 aa).

Positions 1–16 (MPKAPKKITKPKKAEK) are enriched in basic residues. The tract at residues 1–28 (MPKAPKKITKPKKAEKKKNPLFQAKPRS) is disordered.

The protein belongs to the eukaryotic ribosomal protein eL8 family.

The chain is Large ribosomal subunit protein eL8 (RPL7A) from Tetrahymena thermophila.